The sequence spans 253 residues: 4-hydroxy-tetrahydrodipicolinate reductase (253 aa).

NAD(+)-binding positions include 8–13, Asp-34, 76–78, and 108–111; these read GAKGRM, GTT, and APNF. His-138 (proton donor/acceptor) is an active-site residue. His-139 is a binding site for (S)-2,3,4,5-tetrahydrodipicolinate. The active-site Proton donor is Lys-142. Position 148–149 (148–149) interacts with (S)-2,3,4,5-tetrahydrodipicolinate; the sequence is GT.

The protein belongs to the DapB family.

Its subcellular location is the cytoplasm. It carries out the reaction (S)-2,3,4,5-tetrahydrodipicolinate + NAD(+) + H2O = (2S,4S)-4-hydroxy-2,3,4,5-tetrahydrodipicolinate + NADH + H(+). It catalyses the reaction (S)-2,3,4,5-tetrahydrodipicolinate + NADP(+) + H2O = (2S,4S)-4-hydroxy-2,3,4,5-tetrahydrodipicolinate + NADPH + H(+). It participates in amino-acid biosynthesis; L-lysine biosynthesis via DAP pathway; (S)-tetrahydrodipicolinate from L-aspartate: step 4/4. Its function is as follows. Catalyzes the conversion of 4-hydroxy-tetrahydrodipicolinate (HTPA) to tetrahydrodipicolinate. The chain is 4-hydroxy-tetrahydrodipicolinate reductase from Bifidobacterium animalis subsp. lactis (strain AD011).